A 326-amino-acid polypeptide reads, in one-letter code: Eukaryotic translation initiation factor 3 subunit I (326 aa).

5 WD repeats span residues 8–47, 50–89, 145–184, 188–227, and 285–326; these read GHER…RLGT, GHQG…IIAS, MTES…KVVD, DHAA…CLKT, and GHFG…NIFE.

Belongs to the eIF-3 subunit I family. Component of the eukaryotic translation initiation factor 3 (eIF-3) complex. The eIF-3 complex interacts with pix.

It is found in the cytoplasm. Component of the eukaryotic translation initiation factor 3 (eIF-3) complex, which is involved in protein synthesis of a specialized repertoire of mRNAs and, together with other initiation factors, stimulates binding of mRNA and methionyl-tRNAi to the 40S ribosome. The eIF-3 complex specifically targets and initiates translation of a subset of mRNAs involved in cell proliferation. This chain is Eukaryotic translation initiation factor 3 subunit I, found in Drosophila pseudoobscura pseudoobscura (Fruit fly).